The following is a 371-amino-acid chain: MKNLLDYTLSELEAILSPKFRAKQIYEWIYKKNAENFDEMLNLPKDMRTNLAQEFYFDPLYCVKFEESSDGSIKYLFALKDGNTIESVLLPMKEVEVDEGGNISRHARYTICVSSQVGCKMGCLFCLTAKGGLKRNLSPGEIVGQILWIKKTNHIPYERRVNVVYMGMGEPLDNLANVAKAIQILKEPDGLAISPRRQTVSTSGLGAQIKKLGEMDLGVLLAISLHAVTNELRSKLMPVNKAYNIEAVMDAVRGFPIDMRKRVMFEYLVIRGMNDSVKDAKTLVKLLHGIKAKVNLIYFNPHEGSEYGRPELADMLEFQEYLRAHGVTCTIRQSKGLDISAACGQLKQRSQNLSPSNNNTSKPSDIKKSES.

Glutamate 86 serves as the catalytic Proton acceptor. The Radical SAM core domain maps to arginine 105–aspartate 338. A disulfide bridge connects residues cysteine 112 and cysteine 343. Residues cysteine 119, cysteine 123, and cysteine 126 each coordinate [4Fe-4S] cluster. S-adenosyl-L-methionine-binding positions include glycine 169–glutamate 170, serine 201, serine 224–histidine 226, and asparagine 300. Cysteine 343 (S-methylcysteine intermediate) is an active-site residue. Residues glutamine 348 to proline 363 show a composition bias toward polar residues. The interval glutamine 348–serine 371 is disordered.

Belongs to the radical SAM superfamily. RlmN family. [4Fe-4S] cluster is required as a cofactor.

It localises to the cytoplasm. The catalysed reaction is adenosine(2503) in 23S rRNA + 2 reduced [2Fe-2S]-[ferredoxin] + 2 S-adenosyl-L-methionine = 2-methyladenosine(2503) in 23S rRNA + 5'-deoxyadenosine + L-methionine + 2 oxidized [2Fe-2S]-[ferredoxin] + S-adenosyl-L-homocysteine. It carries out the reaction adenosine(37) in tRNA + 2 reduced [2Fe-2S]-[ferredoxin] + 2 S-adenosyl-L-methionine = 2-methyladenosine(37) in tRNA + 5'-deoxyadenosine + L-methionine + 2 oxidized [2Fe-2S]-[ferredoxin] + S-adenosyl-L-homocysteine. Specifically methylates position 2 of adenine 2503 in 23S rRNA and position 2 of adenine 37 in tRNAs. m2A2503 modification seems to play a crucial role in the proofreading step occurring at the peptidyl transferase center and thus would serve to optimize ribosomal fidelity. The chain is Dual-specificity RNA methyltransferase RlmN from Campylobacter curvus (strain 525.92).